We begin with the raw amino-acid sequence, 335 residues long: Protein-arginine kinase (335 aa).

The Phosphagen kinase C-terminal domain occupies 21–244 (IVMSSRIRLA…NQIIHDEKQI (224 aa)). ATP is bound by residues 24 to 28 (SSRIR), His-82, Arg-115, 166 to 170 (RASVM), and 197 to 202 (RGIYGE).

It belongs to the ATP:guanido phosphotransferase family.

The catalysed reaction is L-arginyl-[protein] + ATP = N(omega)-phospho-L-arginyl-[protein] + ADP + H(+). Its function is as follows. Catalyzes the specific phosphorylation of arginine residues in proteins. The protein is Protein-arginine kinase of Staphylococcus aureus (strain Mu3 / ATCC 700698).